The following is a 75-amino-acid chain: Alpha-amylase inhibitor Paim-2 (75 aa).

2 cysteine pairs are disulfide-bonded: Cys-10-Cys-26 and Cys-44-Cys-72.

In terms of biological role, inhibits mammalian alpha-amylases specifically but has no action on plant and microbial alpha-amylases. This Streptomyces olivaceoviridis (Streptomyces corchorusii) protein is Alpha-amylase inhibitor Paim-2.